A 187-amino-acid chain; its full sequence is Photosystem I assembly protein Ycf4 (187 aa).

Transmembrane regions (helical) follow at residues L21–S43 and L69–G91.

This sequence belongs to the Ycf4 family.

Its subcellular location is the plastid. The protein localises to the cyanelle thylakoid membrane. Functionally, seems to be required for the assembly of the photosystem I complex. This chain is Photosystem I assembly protein Ycf4, found in Cyanophora paradoxa.